Consider the following 1021-residue polypeptide: Sodium/potassium-transporting ATPase subunit alpha-1 (1021 aa).

Positions 1-5 (MGKGV) are excised as a propeptide. A compositionally biased stretch (basic and acidic residues) spans 1 to 11 (MGKGVGRDKYE). A disordered region spans residues 1–37 (MGKGVGRDKYEPAAVSEHGDKKKAKKERDMDELKKEV). The Cytoplasmic segment spans residues 6 to 85 (GRDKYEPAAV…NALTPPPTTP (80 aa)). Position 9 is an N6-acetyllysine (Lys-9). The residue at position 10 (Tyr-10) is a Phosphotyrosine. Ser-16 is subject to Phosphoserine; by PKC. The residue at position 21 (Lys-21) is an N6-acetyllysine. A compositionally biased stretch (basic and acidic residues) spans 26–37 (KERDMDELKKEV). A phosphoserine mark is found at Ser-38 and Ser-45. The interval 80 to 82 (PPP) is phosphoinositide-3 kinase binding. A helical transmembrane segment spans residues 86 to 106 (EWVKFCRQLFGGFSMLLWIGA). The Extracellular portion of the chain corresponds to 107-129 (ILCFLAYGIQAATEEEPQNDNLY). Residues 130-150 (LGVVLSAVVIITGCFSYYQEA) traverse the membrane as a helical segment. Residues 151–286 (KSSKIMESFK…GGQTPIAAEI (136 aa)) lie on the Cytoplasmic side of the membrane. A disordered region spans residues 214–233 (SSLTGESEPQTRSPDFTNEN). Ser-226 carries the post-translational modification Phosphoserine. Tyr-258 carries the post-translational modification Phosphotyrosine. Residues 287 to 306 (EHFIHIITGVAVFLGVSFFI) form a helical membrane-spanning segment. Residues 307 to 318 (LSLILEYTWLEA) lie on the Extracellular side of the membrane. A helical membrane pass occupies residues 319 to 336 (VIFLIGIIVANVPEGLLA). The Cytoplasmic segment spans residues 337–770 (TVTVCLTLTA…EEGRLIFDNL (434 aa)). Asp-374 acts as the 4-aspartylphosphate intermediate in catalysis. Phosphoserine is present on residues Ser-450 and Ser-482. Lys-485 is an ATP binding site. Tyr-540 carries the phosphotyrosine modification. The mediates interaction with SCN7A stretch occupies residues 594 to 715 (RAAVPDAVGK…QGAIVAVTGD (122 aa)). Residue Lys-659 is modified to N6-succinyllysine. Phosphoserine occurs at positions 666 and 673. Mg(2+) contacts are provided by Asp-715 and Asp-719. The chain crosses the membrane as a helical span at residues 771–790 (KKSIAYTLTSNIPEITPFLI). Residues 791-800 (FIIANIPLPL) are Extracellular-facing. A helical membrane pass occupies residues 801–821 (GTVTILCIDLGTDMVPAISLA). Topologically, residues 822-841 (YEQAESDIMKRQPRNPKTDK) are cytoplasmic. Residues 842 to 864 (LVNEQLISMAYGQIGMIQALGGF) form a helical membrane-spanning segment. The Extracellular segment spans residues 865–916 (FTYFVILAENGFLPIHLLGLRVNWDDRWINDVEDSYGQQWTYEQRKIVEFTC). A helical membrane pass occupies residues 917-936 (HTPFFVTIVVVQWADLVICK). Residues 937 to 949 (TRRNSVFQQGMKN) are Cytoplasmic-facing. Ser-941 is modified (phosphoserine; by PKA). Residues 950 to 968 (KILIFGLFEETALAAFLSY) form a helical membrane-spanning segment. The Extracellular segment spans residues 969 to 983 (CPGMGVALRMYPLKP). A helical membrane pass occupies residues 984–1004 (TWWFCAFPYSLLIFVYDEVRK). Over 1005 to 1021 (LIIRRRPGGWVEKETYY) the chain is Cytoplasmic.

The protein belongs to the cation transport ATPase (P-type) (TC 3.A.3) family. Type IIC subfamily. In terms of assembly, the sodium/potassium-transporting ATPase is composed of a catalytic alpha subunit, an auxiliary non-catalytic beta subunit and an additional regulatory subunit. Interacts with regulatory subunit FXYD1. Interacts with regulatory subunit FXYD3. Interacts with SIK1. Interacts with SLC35G1 and STIM1. Interacts with CLN3; this interaction regulates the sodium/potassium-transporting ATPase complex localization at the plasma membrane. Interacts with SCN7A; activates ATP1A1 P-type sodium:potassium-exchanging transporter activity which indirectly signals to nearby neurons to regulate sodium homeostasis. Post-translationally, phosphorylation on Tyr-10 modulates pumping activity. Phosphorylation of Ser-941 by PKA modulates the response of ATP1A1 to PKC. Dephosphorylation by protein phosphatase 2A (PP2A) following increases in intracellular sodium, leading to increase catalytic activity.

Its subcellular location is the cell membrane. It localises to the basolateral cell membrane. It is found in the sarcolemma. The protein resides in the cell projection. The protein localises to the axon. Its subcellular location is the melanosome. It carries out the reaction K(+)(out) + Na(+)(in) + ATP + H2O = K(+)(in) + Na(+)(out) + ADP + phosphate + H(+). Functionally, this is the catalytic component of the active enzyme, which catalyzes the hydrolysis of ATP coupled with the exchange of sodium and potassium ions across the plasma membrane. This action creates the electrochemical gradient of sodium and potassium ions, providing the energy for active transport of various nutrients. Could also be part of an osmosensory signaling pathway that senses body-fluid sodium levels and controls salt intake behavior as well as voluntary water intake to regulate sodium homeostasis. The chain is Sodium/potassium-transporting ATPase subunit alpha-1 (ATP1A1) from Sus scrofa (Pig).